Here is a 207-residue protein sequence, read N- to C-terminus: uncharacterized protein (207 aa).

This sequence belongs to the flavoredoxin family. FMN is required as a cofactor.

This is an uncharacterized protein from Bacillus subtilis (strain 168).